The chain runs to 95 residues: Aspartyl/glutamyl-tRNA(Asn/Gln) amidotransferase subunit C (95 aa).

It belongs to the GatC family. In terms of assembly, heterotrimer of A, B and C subunits.

It carries out the reaction L-glutamyl-tRNA(Gln) + L-glutamine + ATP + H2O = L-glutaminyl-tRNA(Gln) + L-glutamate + ADP + phosphate + H(+). The enzyme catalyses L-aspartyl-tRNA(Asn) + L-glutamine + ATP + H2O = L-asparaginyl-tRNA(Asn) + L-glutamate + ADP + phosphate + 2 H(+). In terms of biological role, allows the formation of correctly charged Asn-tRNA(Asn) or Gln-tRNA(Gln) through the transamidation of misacylated Asp-tRNA(Asn) or Glu-tRNA(Gln) in organisms which lack either or both of asparaginyl-tRNA or glutaminyl-tRNA synthetases. The reaction takes place in the presence of glutamine and ATP through an activated phospho-Asp-tRNA(Asn) or phospho-Glu-tRNA(Gln). The chain is Aspartyl/glutamyl-tRNA(Asn/Gln) amidotransferase subunit C from Rhizobium etli (strain CIAT 652).